An 883-amino-acid polypeptide reads, in one-letter code: Phosphoenolpyruvate carboxylase (883 aa).

Catalysis depends on residues His-138 and Lys-546.

Belongs to the PEPCase type 1 family. Mg(2+) is required as a cofactor.

It catalyses the reaction oxaloacetate + phosphate = phosphoenolpyruvate + hydrogencarbonate. In terms of biological role, forms oxaloacetate, a four-carbon dicarboxylic acid source for the tricarboxylic acid cycle. The protein is Phosphoenolpyruvate carboxylase of Salmonella schwarzengrund (strain CVM19633).